Here is a 97-residue protein sequence, read N- to C-terminus: Large ribosomal subunit protein uL23 (97 aa).

This sequence belongs to the universal ribosomal protein uL23 family. As to quaternary structure, part of the 50S ribosomal subunit. Contacts protein L29, and trigger factor when it is bound to the ribosome.

Functionally, one of the early assembly proteins it binds 23S rRNA. One of the proteins that surrounds the polypeptide exit tunnel on the outside of the ribosome. Forms the main docking site for trigger factor binding to the ribosome. The polypeptide is Large ribosomal subunit protein uL23 (Brachyspira hyodysenteriae (strain ATCC 49526 / WA1)).